Consider the following 319-residue polypeptide: Putative metal ion transporter YfjQ (319 aa).

Transmembrane regions (helical) follow at residues 254 to 274 (IMMT…IAGV) and 290 to 310 (GYFA…IWFV).

Belongs to the CorA metal ion transporter (MIT) (TC 1.A.35) family.

It localises to the cell membrane. This chain is Putative metal ion transporter YfjQ (yfjQ), found in Bacillus subtilis (strain 168).